The following is a 342-amino-acid chain: HPr kinase/phosphorylase (342 aa).

Catalysis depends on residues H153 and K174. G168 to S175 provides a ligand contact to ATP. Mg(2+) is bound at residue S175. D192 functions as the Proton acceptor; for phosphorylation activity. Proton donor; for dephosphorylation activity in the catalytic mechanism. Positions M217–D226 are important for the catalytic mechanism of both phosphorylation and dephosphorylation. E218 lines the Mg(2+) pocket. Residue R259 is part of the active site. The important for the catalytic mechanism of dephosphorylation stretch occupies residues P280–K285.

Belongs to the HPrK/P family. As to quaternary structure, homohexamer. It depends on Mg(2+) as a cofactor.

It catalyses the reaction [HPr protein]-L-serine + ATP = [HPr protein]-O-phospho-L-serine + ADP + H(+). The enzyme catalyses [HPr protein]-O-phospho-L-serine + phosphate + H(+) = [HPr protein]-L-serine + diphosphate. Catalyzes the ATP- as well as the pyrophosphate-dependent phosphorylation of a specific serine residue in HPr, a phosphocarrier protein of the phosphoenolpyruvate-dependent sugar phosphotransferase system (PTS). HprK/P also catalyzes the pyrophosphate-producing, inorganic phosphate-dependent dephosphorylation (phosphorolysis) of seryl-phosphorylated HPr (P-Ser-HPr). The protein is HPr kinase/phosphorylase of Chlorobaculum tepidum (strain ATCC 49652 / DSM 12025 / NBRC 103806 / TLS) (Chlorobium tepidum).